We begin with the raw amino-acid sequence, 609 residues long: UvrABC system protein C (609 aa).

A GIY-YIG domain is found at 16 to 94 (SSAGVYRMYD…IKQYMPKYNV (79 aa)). In terms of domain architecture, UVR spans 203-238 (QQVISTLVAKMEQAAQQQEYEQAARFRDQIMALRKV).

This sequence belongs to the UvrC family. As to quaternary structure, interacts with UvrB in an incision complex.

It is found in the cytoplasm. Functionally, the UvrABC repair system catalyzes the recognition and processing of DNA lesions. UvrC both incises the 5' and 3' sides of the lesion. The N-terminal half is responsible for the 3' incision and the C-terminal half is responsible for the 5' incision. The chain is UvrABC system protein C from Shewanella putrefaciens (strain CN-32 / ATCC BAA-453).